The sequence spans 319 residues: V-set and transmembrane domain-containing protein 4 (319 aa).

Residues 1–23 form the signal peptide; sequence MRLRLLALAAAVLLGPAPEVCGA. In terms of domain architecture, Ig-like spans 24-154; the sequence is LNVTVSPGPV…SSATEMRVIS (131 aa). N-linked (GlcNAc...) asparagine glycosylation is found at N25 and N41. C46 and C126 are oxidised to a cystine. N143 is a glycosylation site (N-linked (GlcNAc...) asparagine). The helical transmembrane segment at 180–200 threads the bilayer; the sequence is AVLVCCVGILSVLLFTLVIAW.

Post-translationally, proteolytically cleaved to generate a bioactive peptide. In terms of tissue distribution, peptide Lv is widely expressed in various tissues and the central nervous system, including the retinal photoreceptor layer, hippocampus, olfactory bulb, and cerebellum.

It localises to the cell membrane. The protein localises to the secreted. Peptide Lv enhances L-type voltage-gated calcium channel (L-VGCC) currents in retinal photoreceptors. The polypeptide is V-set and transmembrane domain-containing protein 4 (Vstm4) (Mus musculus (Mouse)).